Here is a 782-residue protein sequence, read N- to C-terminus: Coiled-coil alpha-helical rod protein 1 (782 aa).

Basic and acidic residues-rich tracts occupy residues 62–74 (ERDV…EPGR) and 208–218 (ETRRAGEAKEL). Disordered stretches follow at residues 62-82 (ERDV…WGLE) and 191-218 (SSLT…AKEL). 3 coiled-coil regions span residues 82–314 (EGSQ…ELTR), 344–435 (LMVQ…VVNA), and 498–691 (VADV…QQEG).

It localises to the cytoplasm. The protein localises to the nucleus. May be a regulator of keratinocyte proliferation or differentiation. This Pongo pygmaeus (Bornean orangutan) protein is Coiled-coil alpha-helical rod protein 1 (CCHCR1).